We begin with the raw amino-acid sequence, 275 residues long: Penicillin-insensitive murein endopeptidase (275 aa).

Positions 1–19 are cleaved as a signal peptide; it reads MKNWIVGMVALVTMVPVMA. Disulfide bonds link Cys-44–Cys-264, Cys-187–Cys-235, and Cys-216–Cys-223. Residues His-110, His-113, Asp-120, Asp-147, and His-211 each coordinate Zn(2+). A disordered region spans residues 227–262; sequence DTPPPGDGCGAELESWFQPPPPSAKPGKTLPPPLPP. A compositionally biased stretch (pro residues) spans 244 to 262; that stretch reads QPPPPSAKPGKTLPPPLPP.

This sequence belongs to the peptidase M74 family. Dimer. Requires Zn(2+) as cofactor.

It is found in the periplasm. Murein endopeptidase that cleaves the D-alanyl-meso-2,6-diamino-pimelyl amide bond that connects peptidoglycan strands. Likely plays a role in the removal of murein from the sacculus. The sequence is that of Penicillin-insensitive murein endopeptidase from Yersinia pestis bv. Antiqua (strain Antiqua).